The primary structure comprises 119 residues: Tubulin-specific chaperone A (119 aa).

The protein belongs to the TBCA family. In terms of assembly, supercomplex made of cofactors A to E. Cofactors A and D function by capturing and stabilizing tubulin in a quasi-native conformation. Cofactor E binds to the cofactor D-tubulin complex; interaction with cofactor C then causes the release of tubulin polypeptides that are committed to the native state.

It is found in the cytoplasm. It localises to the cytoskeleton. In terms of biological role, required for the maintenance of microtubule structures and cell polarity. Beta-tubulin-folding protein; may have a regulatory role in the tubulin-folding pathway. The sequence is that of Tubulin-specific chaperone A (alp31) from Schizosaccharomyces pombe (strain 972 / ATCC 24843) (Fission yeast).